The following is a 146-amino-acid chain: Nucleoside diphosphate kinase (146 aa).

ATP-binding residues include Lys11, Phe59, Arg87, Thr93, Arg104, and Asn114. His117 functions as the Pros-phosphohistidine intermediate in the catalytic mechanism.

It belongs to the NDK family. As to quaternary structure, homotetramer. It depends on Mg(2+) as a cofactor.

The protein resides in the cytoplasm. It catalyses the reaction a 2'-deoxyribonucleoside 5'-diphosphate + ATP = a 2'-deoxyribonucleoside 5'-triphosphate + ADP. It carries out the reaction a ribonucleoside 5'-diphosphate + ATP = a ribonucleoside 5'-triphosphate + ADP. Functionally, major role in the synthesis of nucleoside triphosphates other than ATP. The ATP gamma phosphate is transferred to the NDP beta phosphate via a ping-pong mechanism, using a phosphorylated active-site intermediate. The sequence is that of Nucleoside diphosphate kinase from Anaeromyxobacter sp. (strain Fw109-5).